A 226-amino-acid polypeptide reads, in one-letter code: ATP synthase F(0) complex subunit a (226 aa).

The next 6 membrane-spanning stretches (helical) occupy residues 6-26 (FASF…IILF), 68-88 (WSLM…LGLL), 97-117 (QLSM…VMGF), 138-158 (IPML…ALAV), 164-184 (ITAG…LSTI), and 189-209 (ALII…VALI).

This sequence belongs to the ATPase A chain family. In terms of assembly, component of the ATP synthase complex composed at least of ATP5F1A/subunit alpha, ATP5F1B/subunit beta, ATP5MC1/subunit c (homooctomer), MT-ATP6/subunit a, MT-ATP8/subunit 8, ATP5ME/subunit e, ATP5MF/subunit f, ATP5MG/subunit g, ATP5MK/subunit k, ATP5MJ/subunit j, ATP5F1C/subunit gamma, ATP5F1D/subunit delta, ATP5F1E/subunit epsilon, ATP5PF/subunit F6, ATP5PB/subunit b, ATP5PD/subunit d, ATP5PO/subunit OSCP. ATP synthase complex consists of a soluble F(1) head domain (subunits alpha(3) and beta(3)) - the catalytic core - and a membrane F(0) domain - the membrane proton channel (subunits c, a, 8, e, f, g, k and j). These two domains are linked by a central stalk (subunits gamma, delta, and epsilon) rotating inside the F1 region and a stationary peripheral stalk (subunits F6, b, d, and OSCP). Interacts with DNAJC30; interaction is direct.

It localises to the mitochondrion inner membrane. The enzyme catalyses H(+)(in) = H(+)(out). Its function is as follows. Subunit a, of the mitochondrial membrane ATP synthase complex (F(1)F(0) ATP synthase or Complex V) that produces ATP from ADP in the presence of a proton gradient across the membrane which is generated by electron transport complexes of the respiratory chain. ATP synthase complex consist of a soluble F(1) head domain - the catalytic core - and a membrane F(1) domain - the membrane proton channel. These two domains are linked by a central stalk rotating inside the F(1) region and a stationary peripheral stalk. During catalysis, ATP synthesis in the catalytic domain of F(1) is coupled via a rotary mechanism of the central stalk subunits to proton translocation. With the subunit c (ATP5MC1), forms the proton-conducting channel in the F(0) domain, that contains two crucial half-channels (inlet and outlet) that facilitate proton movement from the mitochondrial intermembrane space (IMS) into the matrix. Protons are taken up via the inlet half-channel and released through the outlet half-channel, following a Grotthuss mechanism. The polypeptide is ATP synthase F(0) complex subunit a (Pan troglodytes (Chimpanzee)).